Here is a 429-residue protein sequence, read N- to C-terminus: 4-hydroxy-3-methylbut-2-en-1-yl diphosphate synthase (flavodoxin) (429 aa).

[4Fe-4S] cluster-binding residues include C317, C320, C363, and E370.

The protein belongs to the IspG family. The cofactor is [4Fe-4S] cluster.

The enzyme catalyses (2E)-4-hydroxy-3-methylbut-2-enyl diphosphate + oxidized [flavodoxin] + H2O + 2 H(+) = 2-C-methyl-D-erythritol 2,4-cyclic diphosphate + reduced [flavodoxin]. It functions in the pathway isoprenoid biosynthesis; isopentenyl diphosphate biosynthesis via DXP pathway; isopentenyl diphosphate from 1-deoxy-D-xylulose 5-phosphate: step 5/6. Functionally, converts 2C-methyl-D-erythritol 2,4-cyclodiphosphate (ME-2,4cPP) into 1-hydroxy-2-methyl-2-(E)-butenyl 4-diphosphate. In Deinococcus radiodurans (strain ATCC 13939 / DSM 20539 / JCM 16871 / CCUG 27074 / LMG 4051 / NBRC 15346 / NCIMB 9279 / VKM B-1422 / R1), this protein is 4-hydroxy-3-methylbut-2-en-1-yl diphosphate synthase (flavodoxin).